A 737-amino-acid polypeptide reads, in one-letter code: Palmitoyltransferase akr1 (737 aa).

A disordered region spans residues 1–60 (MSSGDPPSGLQASGSNSSAALGLSPPSAPSGKSAATPPKVATDDASVELSSMKSERSPAK). The Cytoplasmic segment spans residues 1–314 (MSSGDPPSGL…YVRDKAIMSK (314 aa)). The span at 7-38 (PSGLQASGSNSSAALGLSPPSAPSGKSAATPP) shows a compositional bias: low complexity. 5 ANK repeats span residues 97 to 126 (EGIT…DVNA), 131 to 160 (SVAT…DPLL), 164 to 193 (QGYN…PVDV), 197 to 226 (QGHT…NPNA), and 230 to 259 (GGLA…DRFA). 2 helical membrane passes run 315 to 335 (FFFF…SNMV) and 336 to 356 (VYFA…VAKK). Residues 357 to 372 (AASQGPSEFRIIQKTP) are Cytoplasmic-facing. The helical transmembrane segment at 373–393 (FLAGVFAGSLFWVFVRYVLYV) threads the bilayer. The Lumenal portion of the chain corresponds to 394–402 (LPATYSTNP). The helical transmembrane segment at 403–423 (FLNLGFVVFFSLTTYFYFYSM) threads the bilayer. The Cytoplasmic portion of the chain corresponds to 424 to 500 (VADPGYVPKL…NCVGVNNLRQ (77 aa)). The DHHC domain maps to 456 to 506 (NFCVYCMIRRPLRSKHCRRCSRCVAKHDHHCPWIDNCVGVNNLRQFVLYIL). Catalysis depends on C486, which acts as the S-palmitoyl cysteine intermediate. A helical transmembrane segment spans residues 501–521 (FVLYILCLEIGIILFLHLTFN). The Lumenal segment spans residues 522-549 (YINGLPAPAEPICNILNDQICSFVLRDT). A helical transmembrane segment spans residues 550–570 (FTLLLDVWIAIQLVWVTMLGV). Topologically, residues 571–737 (VQLVQVSRNQ…VAYDEAADIV (167 aa)) are cytoplasmic.

The protein belongs to the DHHC palmitoyltransferase family. AKR/ZDHHC17 subfamily.

The protein localises to the early endosome membrane. Its subcellular location is the golgi apparatus membrane. It catalyses the reaction L-cysteinyl-[protein] + hexadecanoyl-CoA = S-hexadecanoyl-L-cysteinyl-[protein] + CoA. Its function is as follows. Palmitoyltransferase specific for casein kinase 1. This chain is Palmitoyltransferase akr1 (akr1), found in Emericella nidulans (strain FGSC A4 / ATCC 38163 / CBS 112.46 / NRRL 194 / M139) (Aspergillus nidulans).